The primary structure comprises 197 residues: Glycerol-3-phosphate acyltransferase (197 aa).

The next 5 membrane-spanning stretches (helical) occupy residues 2–22, 53–73, 78–98, 112–132, and 152–174; these read LDVILVIIGYLIGSISSAIVV, AGITLLGDWLKGTLPVLLAWL, PVVASAAGLAAFFGHLFPVYF, VILAWSPLALLATVVTWLAVA, and YMLWLSASPVLTAATAILTAAIV.

Belongs to the PlsY family. As to quaternary structure, probably interacts with PlsX.

The protein resides in the cell inner membrane. It catalyses the reaction an acyl phosphate + sn-glycerol 3-phosphate = a 1-acyl-sn-glycero-3-phosphate + phosphate. The protein operates within lipid metabolism; phospholipid metabolism. Its function is as follows. Catalyzes the transfer of an acyl group from acyl-phosphate (acyl-PO(4)) to glycerol-3-phosphate (G3P) to form lysophosphatidic acid (LPA). This enzyme utilizes acyl-phosphate as fatty acyl donor, but not acyl-CoA or acyl-ACP. The polypeptide is Glycerol-3-phosphate acyltransferase (Halorhodospira halophila (strain DSM 244 / SL1) (Ectothiorhodospira halophila (strain DSM 244 / SL1))).